Here is an 838-residue protein sequence, read N- to C-terminus: Ribonuclease Z (838 aa).

Phosphoserine is present on S824.

The protein belongs to the RNase Z family. Homodimer. The cofactor is Zn(2+).

The protein localises to the cytoplasm. Its subcellular location is the nucleus. The enzyme catalyses Endonucleolytic cleavage of RNA, removing extra 3' nucleotides from tRNA precursor, generating 3' termini of tRNAs. A 3'-hydroxy group is left at the tRNA terminus and a 5'-phosphoryl group is left at the trailer molecule.. Its function is as follows. Zinc phosphodiesterase, which displays some tRNA 3'-processing endonuclease activity. Probably involved in tRNA maturation, by removing a 3'-trailer from precursor tRNA. This is Ribonuclease Z (TRZ1) from Saccharomyces cerevisiae (strain ATCC 204508 / S288c) (Baker's yeast).